The following is a 599-amino-acid chain: Transcription factor COE4 (599 aa).

The interaction with DNA stretch occupies residues 64–67 (RKSN). The segment at 152–171 (CRVLLTHEIMCSRCCDRKSC) adopts a C5-type zinc-finger fold. Interaction with DNA stretches follow at residues 198 to 205 (NCLKNAGN) and 237 to 240 (NNSK). In terms of domain architecture, IPT/TIG spans 256–339 (PCIKAISPGE…KGAPGRFVYT (84 aa)). Disordered stretches follow at residues 449-473 (GYAR…SSYG) and 556-586 (VLRP…TDKF). The span at 464–473 (SPGSQQSSYG) shows a compositional bias: low complexity.

The protein belongs to the COE family. Forms either a homodimer or a heterodimer with a related family member. In terms of tissue distribution, expressed in the olfactory epithelium, including in both neuronal and basal cell layers. Absent in the vomeronasal organ. Absent from NK cells and CD8(+) T cells.

It is found in the nucleus. Functionally, transcription factor. Positively modulates transcription, perhaps less strongly than other early B cell factor/EBF family proteins. Binds an EBF1/Olf-1 consensus site in vitro. The sequence is that of Transcription factor COE4 (Ebf4) from Mus musculus (Mouse).